Consider the following 355-residue polypeptide: tRNA-specific 2-thiouridylase MnmA (355 aa).

ATP is bound by residues 8-15 and methionine 34; that span reads GMSGGVDS. Cysteine 103 serves as the catalytic Nucleophile. Cysteine 103 and cysteine 199 are oxidised to a cystine. Glycine 127 is an ATP binding site. Residues 149–151 form an interaction with tRNA region; that stretch reads KDQ. Cysteine 199 serves as the catalytic Cysteine persulfide intermediate. The tract at residues 305 to 306 is interaction with tRNA; that stretch reads RY.

The protein belongs to the MnmA/TRMU family.

It is found in the cytoplasm. It carries out the reaction S-sulfanyl-L-cysteinyl-[protein] + uridine(34) in tRNA + AH2 + ATP = 2-thiouridine(34) in tRNA + L-cysteinyl-[protein] + A + AMP + diphosphate + H(+). In terms of biological role, catalyzes the 2-thiolation of uridine at the wobble position (U34) of tRNA, leading to the formation of s(2)U34. In Clostridium acetobutylicum (strain ATCC 824 / DSM 792 / JCM 1419 / IAM 19013 / LMG 5710 / NBRC 13948 / NRRL B-527 / VKM B-1787 / 2291 / W), this protein is tRNA-specific 2-thiouridylase MnmA.